The following is an 833-amino-acid chain: MGKKTQKKNSKGRLDKYYYLAKEKGYRARSSFKIIQINEKYGHFLEKSKVVIDLCAAPGSWCQVASNLCPVNSLIIGVDIVPMKTMPNVITFQSDITTEDCRSKLRGYMKTWKADTVLHDGAPNVGLSWAQDAFTQSHLTLQALKLAVENLVVGGTFVTKIFRSKDYNKLIWVFQQLFEKVEATKPPASRNVSAEIFVVCKNFKAPKKLDPRLLDPKEVFEELPDGPQNMEAKVFNPEKKVRKRGGYEEGDYLLYHETGLMDFMKSEDPITMLGEYNKFIVDEEDHDWKIVKKLKQTTKEFLACIEDLKVLGRKDFKMILKWRKAARELLGLDEEEEKPEIEETPLTEEEQIEKELNTLQEKQRLSVKREKRKKNEMKQKEIVRMQLNMINPVDIGIEAAELGRESIFNLKTAEKTGILDKLAKGKRRMIFDQNELAIDNDIHIDENAPLDDRDELAEADELESQLDAMYSNYKERKSERDAKFRAKQARESSEADNWNGFEDKQSDEENEEETKDYVDDDDNSDLSDSDDDEAINQLIAKLKSRENSSKLSSKARALFSDSLFEGVEPDLPGKADLADSESVGDVKQLTKKRKLNPLPAEQISEAESSDEDSDFEIVANNEDGDVDSEYDSEEEAKRTKQEKHSKDIDIATVEAMTLAHQLALGHKTKHDLIEEGFNRYSFRDMENLPEWFVEEEKQHSKINKPITKEAAMAIKDKLKALNARPIKKVAEAKARKKHRAVARLEKLKKKAGLINDDSDKSEKDKAEEIAKLMRKVTKKAKQKPKVTVVVASGKNRGLSGRPKGVKGKYKMVDGVLKNEQRALKRIAKKHHKK.

Residues glycine 59, tryptophan 61, aspartate 79, aspartate 95, and aspartate 120 each coordinate S-adenosyl-L-methionine. The active-site Proton acceptor is the lysine 160. Coiled-coil stretches lie at residues 348–389 (EEEQ…QLNM) and 453–481 (RDEL…SERD). Basic and acidic residues predominate over residues 477-493 (KSERDAKFRAKQARESS). 3 disordered regions span residues 477–532 (KSER…SDDD), 592–645 (KRKL…EKHS), and 776–810 (VTKK…GKYK). Acidic residues-rich tracts occupy residues 505-532 (QSDE…SDDD) and 622-634 (EDGD…DSEE). Positions 635-645 (EAKRTKQEKHS) are enriched in basic and acidic residues. A coiled-coil region spans residues 730 to 782 (AEAKARKKHRAVARLEKLKKKAGLINDDSDKSEKDKAEEIAKLMRKVTKKAKQ).

Belongs to the class I-like SAM-binding methyltransferase superfamily. RNA methyltransferase RlmE family. SPB1 subfamily. Component of the nucleolar and nucleoplasmic pre-60S ribosomal particle.

Its subcellular location is the nucleus. It localises to the nucleolus. It carries out the reaction a ribonucleotide in rRNA + S-adenosyl-L-methionine = a 2'-O-methylribonucleotide in rRNA + S-adenosyl-L-homocysteine + H(+). Functionally, required for proper assembly of pre-ribosomal particles during the biogenesis of the 60S ribosomal subunit. This Kluyveromyces lactis (strain ATCC 8585 / CBS 2359 / DSM 70799 / NBRC 1267 / NRRL Y-1140 / WM37) (Yeast) protein is AdoMet-dependent rRNA methyltransferase SPB1.